A 158-amino-acid chain; its full sequence is 3-hydroxyacyl-[acyl-carrier-protein] dehydratase FabZ (158 aa).

The active site involves histidine 57.

It belongs to the thioester dehydratase family. FabZ subfamily.

Its subcellular location is the cytoplasm. It catalyses the reaction a (3R)-hydroxyacyl-[ACP] = a (2E)-enoyl-[ACP] + H2O. Involved in unsaturated fatty acids biosynthesis. Catalyzes the dehydration of short chain beta-hydroxyacyl-ACPs and long chain saturated and unsaturated beta-hydroxyacyl-ACPs. The protein is 3-hydroxyacyl-[acyl-carrier-protein] dehydratase FabZ of Helicobacter acinonychis (strain Sheeba).